Here is a 354-residue protein sequence, read N- to C-terminus: Hyaluronan and proteoglycan link protein 1 (354 aa).

A propeptide spanning residues 1–15 (MKSLLLLVLISICWA) is cleaved from the precursor. 2 N-linked (GlcNAc...) asparagine glycosylation sites follow: Asn-21 and Asn-56. Residues 38–152 (PHLLVEAEQA…EGLEDDTVVV (115 aa)) enclose the Ig-like V-type domain. Intrachain disulfides connect Cys-61–Cys-139, Cys-181–Cys-252, Cys-205–Cys-226, Cys-279–Cys-349, and Cys-304–Cys-325. 2 Link domains span residues 159-254 (VVFP…FCFT) and 259-351 (GRFY…YCFR).

It belongs to the HAPLN family. Widely expressed. Weakly expressed in the brain.

The protein resides in the secreted. Its subcellular location is the extracellular space. The protein localises to the extracellular matrix. Its function is as follows. Stabilizes the aggregates of proteoglycan monomers with hyaluronic acid in the extracellular cartilage matrix. The chain is Hyaluronan and proteoglycan link protein 1 (HAPLN1) from Homo sapiens (Human).